Consider the following 352-residue polypeptide: Cuticle collagen dpy-17 (352 aa).

An N-terminal signal peptide occupies residues 1 to 29 (MSVFAGYAACTLGAVSMLLCVSLVPQVYQ). The furin-like endopeptidase recognition region stretch occupies residues 61-64 (RVRR). Disordered regions lie at residues 73–143 (GGYG…GPGD) and 156–352 (GPAG…GYRN). The span at 87 to 97 (GPHGGFPGGPQ) shows a compositional bias: gly residues. 4 triple-helical region regions span residues 156 to 182 (GPAG…DGED), 202 to 264 (GPQG…DVEH), 267 to 290 (GLPG…QGDR), and 294 to 329 (GIAG…PGQD). Positions 202–259 (GPQGPPGSQGKPGARGMRGARGQAAMPGRDGSPGMPGSLGPIGPPGAAGEEGPTGEPG) constitute a Collagen-like domain. Positions 207–259 (PGSQGKPGARGMRGARGQAAMPGRDGSPGMPGSLGPIGPPGAAGEEGPTGEPG) are enriched in low complexity. Polar residues predominate over residues 337–352 (QRNTNAAVSGNQGYRN).

Belongs to the cuticular collagen family. Collagen polypeptide chains are complexed within the cuticle by disulfide bonds and other types of covalent cross-links.

The protein localises to the secreted. It localises to the extracellular space. Secreted collagen that forms part of the nematode cuticle, which functions as an exoskeleton and a barrier to protect the worm from its environment. Secretion and subsequent incorporation into the cuticle is likely mediated by bli-4, which probably cleaves at the N-terminal consensus furin cleavage site. The sequence is that of Cuticle collagen dpy-17 from Caenorhabditis elegans.